Consider the following 903-residue polypeptide: DNA gyrase subunit A (903 aa).

A Topo IIA-type catalytic domain is found at 36–499 (LPDARDGFKP…AIDDSDDEDL (464 aa)). Y124 acts as the O-(5'-phospho-DNA)-tyrosine intermediate in catalysis. The GyrA-box motif lies at 526-532 (QNRGGKG). The span at 881-895 (VDDDSVVKDDAEKQE) shows a compositional bias: basic and acidic residues. Residues 881–903 (VDDDSVVKDDAEKQEIGPTETEE) form a disordered region.

Belongs to the type II topoisomerase GyrA/ParC subunit family. In terms of assembly, heterotetramer, composed of two GyrA and two GyrB chains. In the heterotetramer, GyrA contains the active site tyrosine that forms a transient covalent intermediate with DNA, while GyrB binds cofactors and catalyzes ATP hydrolysis.

It localises to the cytoplasm. It carries out the reaction ATP-dependent breakage, passage and rejoining of double-stranded DNA.. A type II topoisomerase that negatively supercoils closed circular double-stranded (ds) DNA in an ATP-dependent manner to modulate DNA topology and maintain chromosomes in an underwound state. Negative supercoiling favors strand separation, and DNA replication, transcription, recombination and repair, all of which involve strand separation. Also able to catalyze the interconversion of other topological isomers of dsDNA rings, including catenanes and knotted rings. Type II topoisomerases break and join 2 DNA strands simultaneously in an ATP-dependent manner. This is DNA gyrase subunit A from Fibrobacter succinogenes (strain ATCC 19169 / S85).